A 616-amino-acid chain; its full sequence is 2-isopropylmalate synthase (616 aa).

The segment at 1 to 34 (MSPNDAFISAPAKIETPVGPRNEGQPAWNKQRGS) is disordered. The Pyruvate carboxyltransferase domain maps to 67–341 (PQWCAVDLRD…DPQLDFTDIR (275 aa)). Positions 76, 280, 282, and 316 each coordinate Mg(2+). The interval 490 to 616 (RTAPVEQIAL…NHEAVLAGGV (127 aa)) is regulatory domain.

The protein belongs to the alpha-IPM synthase/homocitrate synthase family. LeuA type 2 subfamily. Homodimer. Mg(2+) is required as a cofactor.

Its subcellular location is the cytoplasm. The catalysed reaction is 3-methyl-2-oxobutanoate + acetyl-CoA + H2O = (2S)-2-isopropylmalate + CoA + H(+). Its pathway is amino-acid biosynthesis; L-leucine biosynthesis; L-leucine from 3-methyl-2-oxobutanoate: step 1/4. Functionally, catalyzes the condensation of the acetyl group of acetyl-CoA with 3-methyl-2-oxobutanoate (2-ketoisovalerate) to form 3-carboxy-3-hydroxy-4-methylpentanoate (2-isopropylmalate). This Corynebacterium glutamicum (strain R) protein is 2-isopropylmalate synthase.